Reading from the N-terminus, the 387-residue chain is Exodeoxyribonuclease 7 large subunit (387 aa).

The protein belongs to the XseA family. In terms of assembly, heterooligomer composed of large and small subunits.

Its subcellular location is the cytoplasm. It catalyses the reaction Exonucleolytic cleavage in either 5'- to 3'- or 3'- to 5'-direction to yield nucleoside 5'-phosphates.. In terms of biological role, bidirectionally degrades single-stranded DNA into large acid-insoluble oligonucleotides, which are then degraded further into small acid-soluble oligonucleotides. The protein is Exodeoxyribonuclease 7 large subunit of Campylobacter jejuni subsp. jejuni serotype O:6 (strain 81116 / NCTC 11828).